Reading from the N-terminus, the 203-residue chain is Recombination protein RecR (203 aa).

Residues 58-73 (CDYCGNLDIVSICNIC) form a C4-type zinc finger. One can recognise a Toprim domain in the interval 81–177 (STIAVVESVA…KISKLASGIP (97 aa)).

The protein belongs to the RecR family.

May play a role in DNA repair. It seems to be involved in an RecBC-independent recombinational process of DNA repair. It may act with RecF and RecO. This Orientia tsutsugamushi (strain Ikeda) (Rickettsia tsutsugamushi) protein is Recombination protein RecR.